Here is a 125-residue protein sequence, read N- to C-terminus: Glycine cleavage system H protein (125 aa).

The region spanning 23 to 103 (TALVGITDFA…PYNAWLIKMK (81 aa)) is the Lipoyl-binding domain. N6-lipoyllysine is present on K64.

It belongs to the GcvH family. In terms of assembly, the glycine cleavage system is composed of four proteins: P, T, L and H. Requires (R)-lipoate as cofactor.

Functionally, the glycine cleavage system catalyzes the degradation of glycine. The H protein shuttles the methylamine group of glycine from the P protein to the T protein. This is Glycine cleavage system H protein from Chlorobium chlorochromatii (strain CaD3).